The primary structure comprises 244 residues: Phosphoadenosine 5'-phosphosulfate reductase (244 aa).

Cys-239 functions as the Nucleophile; cysteine thiosulfonate intermediate in the catalytic mechanism.

This sequence belongs to the PAPS reductase family. CysH subfamily.

It localises to the cytoplasm. The enzyme catalyses [thioredoxin]-disulfide + sulfite + adenosine 3',5'-bisphosphate + 2 H(+) = [thioredoxin]-dithiol + 3'-phosphoadenylyl sulfate. It functions in the pathway sulfur metabolism; hydrogen sulfide biosynthesis; sulfite from sulfate: step 3/3. Its function is as follows. Catalyzes the formation of sulfite from phosphoadenosine 5'-phosphosulfate (PAPS) using thioredoxin as an electron donor. In Shigella flexneri serotype 5b (strain 8401), this protein is Phosphoadenosine 5'-phosphosulfate reductase.